The primary structure comprises 254 residues: Phosphoglycerate mutase 1 (254 aa).

Substrate is bound by residues 10 to 17 (RHGESAWN) and 23 to 24 (SG). Residue His-11 is the Tele-phosphohistidine intermediate of the active site. 2 positions are modified to phosphoserine: Ser-14 and Ser-23. Position 26 is a phosphotyrosine (Tyr-26). Ser-31 carries the phosphoserine modification. Residues Arg-62, 89–92 (ERHY), and Lys-100 each bind substrate. Residue Glu-89 is the Proton donor/acceptor of the active site. Lys-106 carries the N6-acetyllysine modification. 116 to 117 (RR) lines the substrate pocket. Ser-118 carries the phosphoserine modification. 187–188 (GN) provides a ligand contact to substrate. N6-acetyllysine; alternate is present on Lys-251. Residue Lys-251 is modified to N6-succinyllysine; alternate. Residues Lys-253 and Lys-254 each carry the N6-acetyllysine modification.

Belongs to the phosphoglycerate mutase family. BPG-dependent PGAM subfamily. Homodimer. Post-translationally, acetylated at Lys-253, Lys-253 and Lys-254 under high glucose condition. Acetylation increases catalytic activity. Under glucose restriction SIRT1 levels dramatically increase and it deacetylates the enzyme. In terms of tissue distribution, expressed in the liver and brain. Not found in the muscle.

It catalyses the reaction (2R)-2-phosphoglycerate = (2R)-3-phosphoglycerate. The catalysed reaction is (2R)-3-phospho-glyceroyl phosphate = (2R)-2,3-bisphosphoglycerate + H(+). In terms of biological role, catalyzes the interconversion of 2-phosphoglycerate and 3-phosphoglyceratea crucial step in glycolysis, by using 2,3-bisphosphoglycerate. Also catalyzes the interconversion of (2R)-2,3-bisphosphoglycerate and (2R)-3-phospho-glyceroyl phosphate. This Homo sapiens (Human) protein is Phosphoglycerate mutase 1.